A 93-amino-acid chain; its full sequence is Bublin coiled-coil protein (93 aa).

2 disordered regions span residues 1–26 (MAGP…GDTF) and 74–93 (QQQS…QPPA). Positions 17-26 (DEGDEGGDTF) are enriched in acidic residues. The stretch at 59 to 80 (LKELLESNRQTRLEFQQQSKQL) forms a coiled coil.

It belongs to the UPF0184 (EST00098) family.

Its subcellular location is the cell junction. The protein localises to the cytoplasm. It is found in the cytoskeleton. Functionally, essential for intermediate filament organization in intestinal cells, interacts with intermediate filament and regulates intestinal lumen morphology. This is Bublin coiled-coil protein (BBLN) from Taeniopygia guttata (Zebra finch).